A 208-amino-acid polypeptide reads, in one-letter code: Small ribosomal subunit protein uS4 (208 aa).

Positions 98 to 161 (RRLDNVIYRL…KESPRIKELL (64 aa)) constitute an S4 RNA-binding domain.

This sequence belongs to the universal ribosomal protein uS4 family. Part of the 30S ribosomal subunit. Contacts protein S5. The interaction surface between S4 and S5 is involved in control of translational fidelity.

In terms of biological role, one of the primary rRNA binding proteins, it binds directly to 16S rRNA where it nucleates assembly of the body of the 30S subunit. Functionally, with S5 and S12 plays an important role in translational accuracy. This chain is Small ribosomal subunit protein uS4, found in Pelotomaculum thermopropionicum (strain DSM 13744 / JCM 10971 / SI).